Consider the following 852-residue polypeptide: DNA polymerase kappa (852 aa).

The UmuC domain occupies 102–357; sequence IVHVDMDAFY…LPIRKVSGIG (256 aa). Mg(2+) contacts are provided by Asp-106 and Asp-197. The tract at residues 252 to 273 is disordered; sequence FEDSPPDLQPQGSPFQLNSEEQ. Residues 261–273 are compositionally biased toward polar residues; sequence PQGSPFQLNSEEQ. UBZ4-type zinc fingers lie at residues 619 to 649 and 761 to 791; these read TFIC…DGPS and ALVC…NKGI. Positions 622, 625, 640, 644, 764, 767, 782, and 786 each coordinate Zn(2+). The disordered stretch occupies residues 798-852; that stretch reads SEGNSVKQPKESSRSTDRLQKASGRTKRPGTKTKSSTLKKTKPRDPRHTLDGFFK. Residues 805–817 are compositionally biased toward basic and acidic residues; that stretch reads QPKESSRSTDRLQ. The span at 821–839 shows a compositional bias: basic residues; sequence GRTKRPGTKTKSSTLKKTK. Over residues 840–852 the composition is skewed to basic and acidic residues; the sequence is PRDPRHTLDGFFK.

Belongs to the DNA polymerase type-Y family. As to quaternary structure, interacts with PCNA. Interacts with REV1. The cofactor is Mg(2+). Mn(2+) is required as a cofactor. As to expression, detected at low levels in heart, brain, lung, liver, kidney and testis.

Its subcellular location is the nucleus. The enzyme catalyses DNA(n) + a 2'-deoxyribonucleoside 5'-triphosphate = DNA(n+1) + diphosphate. Functionally, DNA polymerase specifically involved in DNA repair. Plays an important role in translesion synthesis, where the normal high-fidelity DNA polymerases cannot proceed and DNA synthesis stalls. Depending on the context, it inserts the correct base, but causes frequent base transitions, transversions and frameshifts. Lacks 3'-5' proofreading exonuclease activity. Forms a Schiff base with 5'-deoxyribose phosphate at abasic sites, but does not have lyase activity. This is DNA polymerase kappa (Polk) from Mus musculus (Mouse).